The following is a 368-amino-acid chain: tRNA-specific 2-thiouridylase MnmA (368 aa).

Residues 11 to 18 (GMSGGVDS) and methionine 37 contribute to the ATP site. The tract at residues 97–99 (NPD) is interaction with target base in tRNA. Cysteine 102 (nucleophile) is an active-site residue. Cysteine 102 and cysteine 199 form a disulfide bridge. Glycine 127 serves as a coordination point for ATP. The interval 149-151 (KDQ) is interaction with tRNA. Residue cysteine 199 is the Cysteine persulfide intermediate of the active site. The interaction with tRNA stretch occupies residues 311 to 312 (RY).

Belongs to the MnmA/TRMU family. Interacts with TusE.

The protein resides in the cytoplasm. It catalyses the reaction S-sulfanyl-L-cysteinyl-[protein] + uridine(34) in tRNA + AH2 + ATP = 2-thiouridine(34) in tRNA + L-cysteinyl-[protein] + A + AMP + diphosphate + H(+). Functionally, catalyzes the 2-thiolation of uridine at the wobble position (U34) of tRNA(Lys), tRNA(Glu) and tRNA(Gln), leading to the formation of s(2)U34, the first step of tRNA-mnm(5)s(2)U34 synthesis. Sulfur is provided by IscS, via a sulfur-relay system. Binds ATP and its substrate tRNAs. The sequence is that of tRNA-specific 2-thiouridylase MnmA from Klebsiella pneumoniae (strain 342).